Here is a 113-residue protein sequence, read N- to C-terminus: Large ribosomal subunit protein P2B (113 aa).

The tract at residues proline 66 to aspartate 113 is disordered. Positions glutamate 89–glutamate 99 are enriched in basic and acidic residues.

This sequence belongs to the eukaryotic ribosomal protein P1/P2 family. P1 and P2 exist as dimers at the large ribosomal subunit. In terms of processing, phosphorylated.

Its function is as follows. Plays an important role in the elongation step of protein synthesis. The protein is Large ribosomal subunit protein P2B (RPP2B) of Zea mays (Maize).